A 212-amino-acid chain; its full sequence is Protein Rv0786c (212 aa).

This Mycobacterium tuberculosis (strain ATCC 25618 / H37Rv) protein is Protein Rv0786c.